We begin with the raw amino-acid sequence, 449 residues long: MIQTVVVYFSASLTLTLITPNFKSNKDLLFVLLIHYIVFYLSDFYRDFWSRGYLEEFKMVLKYSFYYIFISSSLFFIFKNSFTTTRLSFFTFIAMNSILLYLLNSFLKYYRKYSYAKFSRDTKVVLITNKDSLSKMTFRNKYDHNYIAVCILDSSEKDCYDLKHNSLRIINKDALTSELTCLTVDQAFINIPIELFGKYQIQDIINDIEAMGVIVNVNVEALSFDNIGEKRIQTFEGYSVITYSMKFYKYSHLIAKRFLDITGAIIGLLICGIVAIFLVPQIRKDGGPAIFSQNRVGRNGRIFRFYKFRSMRVDAEQIKKDLLVHNQMTGLMFKLEDDPRITKIGKFIRKTSIDELPQFYNVLKGDMSLVGTRPPTVDEYEKYNSTQKRRLSFKPGITGLWQISGRNNITDFDEIVKLDVQYINEWSIWSDIKIILLTLKVVLLGTGAK.

5 consecutive transmembrane segments (helical) span residues 5-22 (VVVY…TPNF), 27-46 (DLLF…DFYR), 59-78 (MVLK…FFIF), 88-107 (SFFT…NSFL), and 258-280 (FLDI…FLVP).

The protein belongs to the bacterial sugar transferase family.

The protein localises to the cell membrane. Functionally, galactosyl transferase is essential for the assembly of the group B streptococci (GBS) type III capsular polysaccharide. May be involved in the formation of either or both galactosidic bonds by catalyzing the addition of galactose to an oligosaccharide precursor or to a lipid intermediate. Type III capsular polysaccharide consists of a linear backbone with short side chains ending in residues of N-acetylneuraminic acid or sialic acid. The presence of sialic acid on the surface of the organism inhibits activation of the alternative pathway of complement and is thought to be an important element in the virulence function of the capsule. This Streptococcus agalactiae serotype III (strain NEM316) protein is Galactosyl transferase CpsE (cpsE).